The following is a 556-amino-acid chain: Arginine--tRNA ligase (556 aa).

The 'HIGH' region motif lies at alanine 133 to histidine 143.

The protein belongs to the class-I aminoacyl-tRNA synthetase family. As to quaternary structure, monomer.

It is found in the cytoplasm. It carries out the reaction tRNA(Arg) + L-arginine + ATP = L-arginyl-tRNA(Arg) + AMP + diphosphate. The protein is Arginine--tRNA ligase of Dehalococcoides mccartyi (strain CBDB1).